A 340-amino-acid chain; its full sequence is GTP 3',8-cyclase (340 aa).

The 227-residue stretch at arginine 20–lysine 246 folds into the Radical SAM core domain. A GTP-binding site is contributed by arginine 29. Positions 36 and 40 each coordinate [4Fe-4S] cluster. Tyrosine 42 serves as a coordination point for S-adenosyl-L-methionine. Cysteine 43 serves as a coordination point for [4Fe-4S] cluster. Arginine 79 contributes to the GTP binding site. Glycine 83 lines the S-adenosyl-L-methionine pocket. A GTP-binding site is contributed by threonine 110. Position 134 (serine 134) interacts with S-adenosyl-L-methionine. Residue lysine 171 coordinates GTP. Residue methionine 205 coordinates S-adenosyl-L-methionine. [4Fe-4S] cluster is bound by residues cysteine 268 and cysteine 271. Arginine 273–arginine 275 lines the GTP pocket. Cysteine 285 provides a ligand contact to [4Fe-4S] cluster.

It belongs to the radical SAM superfamily. MoaA family. In terms of assembly, monomer and homodimer. [4Fe-4S] cluster serves as cofactor.

It catalyses the reaction GTP + AH2 + S-adenosyl-L-methionine = (8S)-3',8-cyclo-7,8-dihydroguanosine 5'-triphosphate + 5'-deoxyadenosine + L-methionine + A + H(+). It functions in the pathway cofactor biosynthesis; molybdopterin biosynthesis. In terms of biological role, catalyzes the cyclization of GTP to (8S)-3',8-cyclo-7,8-dihydroguanosine 5'-triphosphate. This Actinobacillus pleuropneumoniae serotype 7 (strain AP76) protein is GTP 3',8-cyclase.